Reading from the N-terminus, the 27-residue chain is Weak neurotoxin E3 (27 aa).

As to expression, expressed by the venom gland.

It is found in the secreted. Functionally, binds to muscle nicotinic acetylcholine receptor (nAChR) and inhibit acetylcholine from binding to the receptor, thereby impairing neuromuscular transmission. This Micrurus pyrrhocryptus (Coral snake) protein is Weak neurotoxin E3.